A 559-amino-acid chain; its full sequence is MNKLRSSAITQGVQRSPNRSMLRAVGFSDEDFTKPIIGVANGFSTITPCNMGLNKLALKAEESIREAGGMPQMFGTITVSDGISMGTEGMKYSLVSREVIADSIETACNAQSMDGVLAIGGCDKNMPGAMIAIARMNIPSIFIYGGTIKPGKLNGEDLTVVSAFEAVGQLTSGKINEKRLIEVEKNCIPGAGSCGGMFTANTMSAVIEVLGLSLPYSSTMAAEDYEKEVSAEKSAEILVDAIRKDIRPLTLMTKESFENAITVIMAIGGSTNAVLHILAIANTAGIDINIDDFERIRQKVPVICDLKPSGKYVTVDLHKAGGIPQVMKILLNTGLIHGNCRNIEGKTVVESLKDIPVKPPENQDVIRDIDNPLYKKGHLAILKGNLASEGCVAKISGIKNPVLKGPARIFESEEDCLKSILNNDIKAGNVVVIRNEGPVGGPGMREMLAPTSAIVGQGLGEKVALITDGRFSGGTYGLVVGHIAPEAAVGGNIALIKEGDLITVDATNQLIEVELSDEELEMRRINWEKPSKKYKKGVLSKYSRIVSTSSLGAVTDLEE.

A [2Fe-2S] cluster-binding site is contributed by Cys49. Residue Asp81 participates in Mg(2+) binding. Cys122 contacts [2Fe-2S] cluster. Residues Asp123 and Lys124 each coordinate Mg(2+). Lys124 is subject to N6-carboxylysine. Cys194 lines the [2Fe-2S] cluster pocket. Residue Glu446 participates in Mg(2+) binding. The Proton acceptor role is filled by Ser472.

This sequence belongs to the IlvD/Edd family. Homodimer. [2Fe-2S] cluster is required as a cofactor. It depends on Mg(2+) as a cofactor.

The catalysed reaction is (2R)-2,3-dihydroxy-3-methylbutanoate = 3-methyl-2-oxobutanoate + H2O. It carries out the reaction (2R,3R)-2,3-dihydroxy-3-methylpentanoate = (S)-3-methyl-2-oxopentanoate + H2O. It functions in the pathway amino-acid biosynthesis; L-isoleucine biosynthesis; L-isoleucine from 2-oxobutanoate: step 3/4. It participates in amino-acid biosynthesis; L-valine biosynthesis; L-valine from pyruvate: step 3/4. Its function is as follows. Functions in the biosynthesis of branched-chain amino acids. Catalyzes the dehydration of (2R,3R)-2,3-dihydroxy-3-methylpentanoate (2,3-dihydroxy-3-methylvalerate) into 2-oxo-3-methylpentanoate (2-oxo-3-methylvalerate) and of (2R)-2,3-dihydroxy-3-methylbutanoate (2,3-dihydroxyisovalerate) into 2-oxo-3-methylbutanoate (2-oxoisovalerate), the penultimate precursor to L-isoleucine and L-valine, respectively. This chain is Dihydroxy-acid dehydratase, found in Prochlorococcus marinus subsp. pastoris (strain CCMP1986 / NIES-2087 / MED4).